A 402-amino-acid polypeptide reads, in one-letter code: Argininosuccinate synthase (402 aa).

ATP is bound by residues 9 to 17 (AYSGGLDTS) and alanine 36. Residues tyrosine 87 and serine 92 each contribute to the L-citrulline site. Glycine 117 provides a ligand contact to ATP. Positions 119, 123, and 124 each coordinate L-aspartate. Asparagine 123 contacts L-citrulline. L-citrulline-binding residues include arginine 127, serine 176, serine 185, glutamate 261, and tyrosine 273.

Belongs to the argininosuccinate synthase family. Type 1 subfamily. In terms of assembly, homotetramer.

The protein resides in the cytoplasm. The enzyme catalyses L-citrulline + L-aspartate + ATP = 2-(N(omega)-L-arginino)succinate + AMP + diphosphate + H(+). It functions in the pathway amino-acid biosynthesis; L-arginine biosynthesis; L-arginine from L-ornithine and carbamoyl phosphate: step 2/3. The sequence is that of Argininosuccinate synthase from Deinococcus radiodurans (strain ATCC 13939 / DSM 20539 / JCM 16871 / CCUG 27074 / LMG 4051 / NBRC 15346 / NCIMB 9279 / VKM B-1422 / R1).